We begin with the raw amino-acid sequence, 443 residues long: Thymidine phosphorylase (443 aa).

It belongs to the thymidine/pyrimidine-nucleoside phosphorylase family. Homodimer.

It catalyses the reaction thymidine + phosphate = 2-deoxy-alpha-D-ribose 1-phosphate + thymine. The protein operates within pyrimidine metabolism; dTMP biosynthesis via salvage pathway; dTMP from thymine: step 1/2. Functionally, the enzymes which catalyze the reversible phosphorolysis of pyrimidine nucleosides are involved in the degradation of these compounds and in their utilization as carbon and energy sources, or in the rescue of pyrimidine bases for nucleotide synthesis. The chain is Thymidine phosphorylase from Shewanella oneidensis (strain ATCC 700550 / JCM 31522 / CIP 106686 / LMG 19005 / NCIMB 14063 / MR-1).